The primary structure comprises 654 residues: Coiled-coil domain-containing protein 30 (654 aa).

Residues 38–65 (TLESRRDPNSSLQKEFPQHQDEDQSRAA) are disordered. Positions 53–62 (FPQHQDEDQS) are enriched in basic and acidic residues. Coiled coils occupy residues 97 to 244 (REER…LDNA) and 276 to 559 (KSQQ…QIIR). Residues 614-654 (AAAIPKSPEPLSRSQDSESGYINVTSLKETHNTQGDQKPEL) are disordered. The segment covering 625–654 (SRSQDSESGYINVTSLKETHNTQGDQKPEL) has biased composition (polar residues).

It belongs to the prefoldin subunit beta family.

The protein is Coiled-coil domain-containing protein 30 (Ccdc30) of Mus musculus (Mouse).